The following is a 304-amino-acid chain: Oxidoreductase calM (304 aa).

The NADP(+) site is built by isoleucine 26, threonine 45, aspartate 68, and asparagine 98. Catalysis depends on serine 152, which acts as the Proton donor. Residues tyrosine 166, lysine 170, valine 200, and threonine 202 each contribute to the NADP(+) site. The active-site Proton acceptor is tyrosine 166. Residue lysine 170 is the Lowers pKa of active site Tyr of the active site.

Belongs to the short-chain dehydrogenases/reductases (SDR) family.

The protein operates within secondary metabolite biosynthesis. Its function is as follows. Oxidoreductase; part of the gene cluster that mediates the biosynthesis of calbistrin A and related compounds. Calbistrin A is a secondary metabolite with an interesting structure that was recently found to have bioactivity against leukemia cells. It consists of two polyketides linked by an ester bond: a bicyclic decalin containing polyketide and a linear 12 carbon dioic acid structure. The polyketide synthase calA is probably responsible for forming the decalin moiety. Because calA lacks a designated enoylreductase (ER) domain, the required activity is provided by the trans-enoyl reductase calK. Following release from the PKS, calF then probably catalyzes the oxidation and the subsequent Diels Alder cycloisomerization that lead to the formation of the decalin moiety. The decalin polyketide backbone includes two C-methyl groups, at C7 and C11 in backbone, of which the C7 position is probably methylated by the methyltransferase domain of calA. A candidate for adding the methyl group at C11, if not done by CalA, is the cluster methyltransferase calH. Several additional tailoring enzymes within the cluster could be involved in the modification of the decalin polyketide product. Those include the 3 cytochrome P450 monooxygenases CalE, CalG and CalL, of which one might be responsible for the introduction of the extra hydroxyl group attached to the backbone of the decalin moiety, at position C9 in the backbone, that allows for attachment of the linear moiety. One tailoring enzyme activity that is expected to be involved in biosynthesis of calbistrin is an acyltransferase for connecting the two polyketide synthase products, and which could be performed by the cluster acyltransferase calJ. The enzyme responsible for the biosynthesis of the linear moiety, probably a second PKS, has not been identified yet. The protein is Oxidoreductase calM of Penicillium decumbens.